The chain runs to 189 residues: Large ribosomal subunit protein eL19A (189 aa).

Residue Lys-21 forms a Glycyl lysine isopeptide (Lys-Gly) (interchain with G-Cter in ubiquitin) linkage. Residues Ser-30 and Ser-37 each carry the phosphoserine modification. Glycyl lysine isopeptide (Lys-Gly) (interchain with G-Cter in ubiquitin) cross-links involve residues Lys-53 and Lys-60. Residues 58–85 are disordered; the sequence is HSKSRTRAHAQSKREGRHSGYGKRKGTR. Residues 59-68 are compositionally biased toward basic residues; that stretch reads SKSRTRAHAQ. Ser-91 carries the post-translational modification Phosphoserine. Residues Lys-146 and Lys-186 each participate in a glycyl lysine isopeptide (Lys-Gly) (interchain with G-Cter in ubiquitin) cross-link. The disordered stretch occupies residues 164 to 189; the sequence is LKNRAARDRRAQRVAEKRDALLKEDA.

It belongs to the eukaryotic ribosomal protein eL19 family. As to quaternary structure, component of the large ribosomal subunit (LSU). Mature yeast ribosomes consist of a small (40S) and a large (60S) subunit. The 40S small subunit contains 1 molecule of ribosomal RNA (18S rRNA) and 33 different proteins (encoded by 57 genes). The large 60S subunit contains 3 rRNA molecules (25S, 5.8S and 5S rRNA) and 46 different proteins (encoded by 81 genes). eL19 lies in close proximity to the binding site for eukaryotic initiation factor eIF4G.

It localises to the cytoplasm. Its function is as follows. Component of the ribosome, a large ribonucleoprotein complex responsible for the synthesis of proteins in the cell. The small ribosomal subunit (SSU) binds messenger RNAs (mRNAs) and translates the encoded message by selecting cognate aminoacyl-transfer RNA (tRNA) molecules. The large subunit (LSU) contains the ribosomal catalytic site termed the peptidyl transferase center (PTC), which catalyzes the formation of peptide bonds, thereby polymerizing the amino acids delivered by tRNAs into a polypeptide chain. The nascent polypeptides leave the ribosome through a tunnel in the LSU and interact with protein factors that function in enzymatic processing, targeting, and the membrane insertion of nascent chains at the exit of the ribosomal tunnel. eL19 may play a role in the last stages of translation initiation, in particular subunit joining and shedding/releasing factors. This is Large ribosomal subunit protein eL19A from Saccharomyces cerevisiae (strain ATCC 204508 / S288c) (Baker's yeast).